A 288-amino-acid polypeptide reads, in one-letter code: Acetyl-coenzyme A carboxylase carboxyl transferase subunit beta (288 aa).

The CoA carboxyltransferase N-terminal domain occupies 34-288 (LFAKCPGCKQ…TLLSFHGGVQ (255 aa)). Zn(2+) contacts are provided by C38, C41, C56, and C59. A C4-type zinc finger spans residues 38-59 (CPGCKQAIYQKDLGQAKICPNC).

It belongs to the AccD/PCCB family. Acetyl-CoA carboxylase is a heterohexamer composed of biotin carboxyl carrier protein (AccB), biotin carboxylase (AccC) and two subunits each of ACCase subunit alpha (AccA) and ACCase subunit beta (AccD). The cofactor is Zn(2+).

It is found in the cytoplasm. It carries out the reaction N(6)-carboxybiotinyl-L-lysyl-[protein] + acetyl-CoA = N(6)-biotinyl-L-lysyl-[protein] + malonyl-CoA. Its pathway is lipid metabolism; malonyl-CoA biosynthesis; malonyl-CoA from acetyl-CoA: step 1/1. Functionally, component of the acetyl coenzyme A carboxylase (ACC) complex. Biotin carboxylase (BC) catalyzes the carboxylation of biotin on its carrier protein (BCCP) and then the CO(2) group is transferred by the transcarboxylase to acetyl-CoA to form malonyl-CoA. The chain is Acetyl-coenzyme A carboxylase carboxyl transferase subunit beta from Streptococcus thermophilus (strain CNRZ 1066).